Consider the following 173-residue polypeptide: MLNDPLVQEVLFNIFEGDEKGFEVIDVLLEKGETTEEEIAKELGVKLNVVRKLLYKLYDARLVDYKRWKDEDTNWYSYTWLPTLEKLPYVVKKKINELIKDLEKKLEFEKNNMFFFCPNCNVRFTFEEAMDYGFSCPGCGNMLQEFDNSELIKDLEEQIKFLKEELKNNPFLK.

The 86-residue stretch at 3–88 folds into the HTH TFE/IIEalpha-type domain; it reads NDPLVQEVLF…TWLPTLEKLP (86 aa).

It belongs to the TFE family. As to quaternary structure, monomer. Interaction with RNA polymerase subunits RpoF and RpoE is necessary for Tfe stimulatory transcription activity. Able to interact with RNA polymerase in the absence of Tbp or DNA promoter. Interacts both with the preinitiation and elongation complexes.

Its function is as follows. Transcription factor that plays a role in the activation of archaeal genes transcribed by RNA polymerase. Facilitates transcription initiation by enhancing TATA-box recognition by TATA-box-binding protein (Tbp), and transcription factor B (Tfb) and RNA polymerase recruitment. Not absolutely required for transcription in vitro, but particularly important in cases where Tbp or Tfb function is not optimal. It dynamically alters the nucleic acid-binding properties of RNA polymerases by stabilizing the initiation complex and destabilizing elongation complexes. Seems to translocate with the RNA polymerase following initiation and acts by binding to the non template strand of the transcription bubble in elongation complexes. This is Transcription factor E (tfe) from Methanocaldococcus jannaschii (strain ATCC 43067 / DSM 2661 / JAL-1 / JCM 10045 / NBRC 100440) (Methanococcus jannaschii).